The following is a 194-amino-acid chain: MIGLRPAFSTMLFLLLLTGGVYPLLTTALGQWWFPWQANGSLIHKDNVIRGSALIGQSFTAAGYFHGRPSATADTPYNPLASGGSNLAASNPELDAQIQARVAALRAANPQASSAVPVELATASASGLDNNLTPGAAAWQIPRVAAARQLPVEQVAQLVAEYTHRPLASFLGQPVVNIVELNLALDALQGHRAK.

The chain crosses the membrane as a helical span at residues 12-34 (LFLLLLTGGVYPLLTTALGQWWF).

The protein belongs to the KdpC family. As to quaternary structure, the system is composed of three essential subunits: KdpA, KdpB and KdpC.

It localises to the cell inner membrane. Its function is as follows. Part of the high-affinity ATP-driven potassium transport (or Kdp) system, which catalyzes the hydrolysis of ATP coupled with the electrogenic transport of potassium into the cytoplasm. This subunit acts as a catalytic chaperone that increases the ATP-binding affinity of the ATP-hydrolyzing subunit KdpB by the formation of a transient KdpB/KdpC/ATP ternary complex. The polypeptide is Potassium-transporting ATPase KdpC subunit (Salmonella heidelberg (strain SL476)).